A 139-amino-acid chain; its full sequence is Maximins 4/H3 type 4 (139 aa).

The signal sequence occupies residues 1–18; that stretch reads MNFKYIIAVSFLIASAYA. Residues 19–43 constitute a propeptide that is removed on maturation; the sequence is RSVQNDEQSLSQRDVLEEESLREIR. Asparagine amide is present on Asn-70. Residues 74 to 118 constitute a propeptide that is removed on maturation; sequence TAEEHEVMKRLEAVMRDLDSLDHPEEASERETRGFNQDEIAKEKR. Ile-138 bears the Isoleucine amide mark.

Belongs to the bombinin family. Expressed by the skin glands.

It localises to the secreted. In terms of biological role, maximin-4 shows antibacterial activity against both Gram-positive and Gram-negative bacteria. It also shows antimicrobial activity against the fungus C.albicans, but not against A.flavus nor P.uticale. It has little hemolytic activity. It does not possess a significant cytotoxicity against tumor cell lines. It does not possess a significant anti-HIV activity. Its function is as follows. Maximin-H3 shows antibacterial activity against both Gram-positive and Gram-negative bacteria. It also shows antimicrobial activity against the fungus C.albicans. Shows strong hemolytic activity. This is Maximins 4/H3 type 4 from Bombina maxima (Giant fire-bellied toad).